The primary structure comprises 35 residues: Thionin NsW1 (35 aa).

Disulfide bonds link Cys4-Cys32, Cys12-Cys30, and Cys16-Cys26.

Contains 4 disulfide bonds.

Its subcellular location is the secreted. Functionally, antimicrobial peptide disrupting membranes. Has antibacterial against Gram-positive bacteria S.aureus (MIC=6.5 uM) and B.subtilis (MIC=3.25 uM) but not against Gram-negative bacterium E.coli. Has antifungal activity against C.albicans (MIC=1.63 uM). The chain is Thionin NsW1 from Nigella sativa (Black cumin).